Reading from the N-terminus, the 116-residue chain is Small ribosomal subunit protein uS13m (116 aa).

The tract at residues 92–116 (HQDGSPLRGQRTHTNARTARKQIRK) is disordered.

This sequence belongs to the universal ribosomal protein uS13 family. As to quaternary structure, part of the small ribosomal subunit.

It localises to the mitochondrion. Located at the top of the head of the small subunit, it contacts several helices of the 18S rRNA. This Triticum aestivum (Wheat) protein is Small ribosomal subunit protein uS13m (RPS13).